A 221-amino-acid chain; its full sequence is Orotidine 5'-phosphate decarboxylase (221 aa).

Substrate contacts are provided by residues Asp-12, Lys-34, 60–69 (DFKVADIPNT), Ser-117, 170–180 (PGVGAQGGKAS), Gly-193, and Arg-194. The active-site Proton donor is the Lys-62.

Belongs to the OMP decarboxylase family. Type 1 subfamily. In terms of assembly, homodimer.

The enzyme catalyses orotidine 5'-phosphate + H(+) = UMP + CO2. Its pathway is pyrimidine metabolism; UMP biosynthesis via de novo pathway; UMP from orotate: step 2/2. Its function is as follows. Catalyzes the decarboxylation of orotidine 5'-monophosphate (OMP) to uridine 5'-monophosphate (UMP). The protein is Orotidine 5'-phosphate decarboxylase of Methanosarcina acetivorans (strain ATCC 35395 / DSM 2834 / JCM 12185 / C2A).